Reading from the N-terminus, the 594-residue chain is E3 ubiquitin-protein ligase TRAF7 (594 aa).

The interval 1-33 is disordered; it reads MPPINTPRRSDSAISVRSLHSESSMSLRSTFSL. Phosphoserine is present on residues S12 and S15. A compositionally biased stretch (low complexity) spans 15-29; that stretch reads SVRSLHSESSMSLRS. The RING-type zinc-finger motif lies at 55–89; sequence CQLCCSVFKDPVITTCGHTFCRRCALKSEKCPVDN. The segment at 146-216 adopts a TRAF-type zinc-finger fold; the sequence is HESSCDYRPV…RFEGLKEFLQ (71 aa). WD repeat units lie at residues 318-357, 361-398, 401-437, 439-478, 481-518, 521-562, and 565-593; these read GHQG…KCQK, GHDG…KVNT, AHDN…LKLK, ELTG…CIHV, TSGG…QVRT, GHVG…CTQT, and RHQG…KVWT.

The protein belongs to the WD repeat TRAF7 family. In terms of assembly, homodimer. Interacts with MAP3K3 and promotes the kinase activity of this enzyme. Phosphorylated by MAP3K3. In terms of processing, ubiquitinates itself upon phosphorylation. Ubiquitously expressed. Expression is relatively high in heart, liver, kidney, testis, prostate, thyroid, and salivary gland.

The protein resides in the cytoplasmic vesicle. It is found in the cytoplasm. The protein localises to the nucleus. The enzyme catalyses S-ubiquitinyl-[E2 ubiquitin-conjugating enzyme]-L-cysteine + [acceptor protein]-L-lysine = [E2 ubiquitin-conjugating enzyme]-L-cysteine + N(6)-ubiquitinyl-[acceptor protein]-L-lysine.. Its pathway is protein modification; protein ubiquitination. Its function is as follows. E3 ubiquitin and SUMO-protein ligase that plays a role in different biological processes such as innate immunity, inflammation or apoptosis. Potentiates MAP3K3-mediated activation of the NF-kappa-B, JUN/AP1 and DDIT3 transcriptional regulators. Negatively regulates MYB transcriptional activity by sequestering it to the cytosol via SUMOylation. Plays a role in the phosphorylation of MAPK1 and/or MAPK3, probably via its interaction with MAP3K3. Negatively regulates RLR-mediated innate immunity by promoting 'Lys-48'-linked ubiquitination of TBK1 through its RING domain to inhibit the cellular antiviral response. Promotes 'Lys-29'-linked polyubiquitination of NEMO/IKBKG and RELA leading to targeting these two proteins to lysosomal degradative pathways, reducing the transcriptional activity of NF-kappa-B. This is E3 ubiquitin-protein ligase TRAF7 from Mus musculus (Mouse).